A 346-amino-acid polypeptide reads, in one-letter code: DNA primase small subunit PriS (346 aa).

Residues Asp-97, Asp-99, and Asp-278 contribute to the active site.

This sequence belongs to the eukaryotic-type primase small subunit family. As to quaternary structure, heterodimer of a small subunit (PriS) and a large subunit (PriL). It depends on Mg(2+) as a cofactor. The cofactor is Mn(2+).

Functionally, catalytic subunit of DNA primase, an RNA polymerase that catalyzes the synthesis of short RNA molecules used as primers for DNA polymerase during DNA replication. The small subunit contains the primase catalytic core and has DNA synthesis activity on its own. Binding to the large subunit stabilizes and modulates the activity, increasing the rate of DNA synthesis while decreasing the length of the DNA fragments, and conferring RNA synthesis capability. The DNA polymerase activity may enable DNA primase to also catalyze primer extension after primer synthesis. May also play a role in DNA repair. The sequence is that of DNA primase small subunit PriS from Thermococcus onnurineus (strain NA1).